The chain runs to 426 residues: Glutamyl-tRNA reductase (426 aa).

Residues 49-52 (TCNR), Ser101, 106-108 (EPQ), and Gln112 each bind substrate. Residue Cys50 is the Nucleophile of the active site. Residue 181 to 186 (GAGETI) coordinates NADP(+). The segment at 404–426 (DRLFPEKPGLPTSPHSYPDREDR) is disordered.

Belongs to the glutamyl-tRNA reductase family. Homodimer.

The catalysed reaction is (S)-4-amino-5-oxopentanoate + tRNA(Glu) + NADP(+) = L-glutamyl-tRNA(Glu) + NADPH + H(+). It participates in porphyrin-containing compound metabolism; protoporphyrin-IX biosynthesis; 5-aminolevulinate from L-glutamyl-tRNA(Glu): step 1/2. Functionally, catalyzes the NADPH-dependent reduction of glutamyl-tRNA(Glu) to glutamate 1-semialdehyde (GSA). In Xanthomonas campestris pv. phaseoli, this protein is Glutamyl-tRNA reductase.